The following is a 157-amino-acid chain: 2-C-methyl-D-erythritol 2,4-cyclodiphosphate synthase (157 aa).

A divalent metal cation is bound by residues D8 and H10. 4-CDP-2-C-methyl-D-erythritol 2-phosphate-binding positions include 8-10 (DVH) and 34-35 (HS). H42 provides a ligand contact to a divalent metal cation. 4-CDP-2-C-methyl-D-erythritol 2-phosphate is bound by residues 56-58 (DIG), 61-65 (FPDNE), 132-135 (TTTE), F139, and R142.

Belongs to the IspF family. Homotrimer. A divalent metal cation is required as a cofactor.

It carries out the reaction 4-CDP-2-C-methyl-D-erythritol 2-phosphate = 2-C-methyl-D-erythritol 2,4-cyclic diphosphate + CMP. The protein operates within isoprenoid biosynthesis; isopentenyl diphosphate biosynthesis via DXP pathway; isopentenyl diphosphate from 1-deoxy-D-xylulose 5-phosphate: step 4/6. In terms of biological role, involved in the biosynthesis of isopentenyl diphosphate (IPP) and dimethylallyl diphosphate (DMAPP), two major building blocks of isoprenoid compounds. Catalyzes the conversion of 4-diphosphocytidyl-2-C-methyl-D-erythritol 2-phosphate (CDP-ME2P) to 2-C-methyl-D-erythritol 2,4-cyclodiphosphate (ME-CPP) with a corresponding release of cytidine 5-monophosphate (CMP). The sequence is that of 2-C-methyl-D-erythritol 2,4-cyclodiphosphate synthase from Desulforamulus reducens (strain ATCC BAA-1160 / DSM 100696 / MI-1) (Desulfotomaculum reducens).